The following is a 667-amino-acid chain: DNA ligase (667 aa).

NAD(+) is bound by residues 34–38 (DYEFD), 83–84 (SL), and glutamate 117. Lysine 119 acts as the N6-AMP-lysine intermediate in catalysis. The NAD(+) site is built by arginine 140, glutamate 176, lysine 289, and lysine 313. Residues cysteine 407, cysteine 410, cysteine 425, and cysteine 431 each contribute to the Zn(2+) site. The BRCT domain maps to 591–667 (QVNRNFEGMS…ISEDEFMGMM (77 aa)).

The protein belongs to the NAD-dependent DNA ligase family. LigA subfamily. Requires Mg(2+) as cofactor. It depends on Mn(2+) as a cofactor.

The enzyme catalyses NAD(+) + (deoxyribonucleotide)n-3'-hydroxyl + 5'-phospho-(deoxyribonucleotide)m = (deoxyribonucleotide)n+m + AMP + beta-nicotinamide D-nucleotide.. Functionally, DNA ligase that catalyzes the formation of phosphodiester linkages between 5'-phosphoryl and 3'-hydroxyl groups in double-stranded DNA using NAD as a coenzyme and as the energy source for the reaction. It is essential for DNA replication and repair of damaged DNA. The protein is DNA ligase of Chlorobium chlorochromatii (strain CaD3).